The chain runs to 310 residues: GMP synthase [glutamine-hydrolyzing] subunit B (310 aa).

Residues M1 to F187 form the GMPS ATP-PPase domain. Position 27–33 (S27–S33) interacts with ATP.

As to quaternary structure, heterodimer composed of a glutamine amidotransferase subunit (A) and a GMP-binding subunit (B).

The catalysed reaction is XMP + L-glutamine + ATP + H2O = GMP + L-glutamate + AMP + diphosphate + 2 H(+). The protein operates within purine metabolism; GMP biosynthesis; GMP from XMP (L-Gln route): step 1/1. Functionally, catalyzes the synthesis of GMP from XMP. This is GMP synthase [glutamine-hydrolyzing] subunit B (guaAB) from Thermoplasma volcanium (strain ATCC 51530 / DSM 4299 / JCM 9571 / NBRC 15438 / GSS1).